The primary structure comprises 616 residues: 1-deoxy-D-xylulose-5-phosphate synthase (616 aa).

Thiamine diphosphate is bound by residues His-74 and 115–117; that span reads GHS. Asp-146 lines the Mg(2+) pocket. Thiamine diphosphate is bound by residues 147 to 148, Asn-175, Tyr-282, and Glu-365; that span reads GA. Asn-175 is a Mg(2+) binding site.

It belongs to the transketolase family. DXPS subfamily. In terms of assembly, homodimer. Mg(2+) is required as a cofactor. Requires thiamine diphosphate as cofactor.

It carries out the reaction D-glyceraldehyde 3-phosphate + pyruvate + H(+) = 1-deoxy-D-xylulose 5-phosphate + CO2. It functions in the pathway metabolic intermediate biosynthesis; 1-deoxy-D-xylulose 5-phosphate biosynthesis; 1-deoxy-D-xylulose 5-phosphate from D-glyceraldehyde 3-phosphate and pyruvate: step 1/1. Its function is as follows. Catalyzes the acyloin condensation reaction between C atoms 2 and 3 of pyruvate and glyceraldehyde 3-phosphate to yield 1-deoxy-D-xylulose-5-phosphate (DXP). This chain is 1-deoxy-D-xylulose-5-phosphate synthase, found in Chromobacterium violaceum (strain ATCC 12472 / DSM 30191 / JCM 1249 / CCUG 213 / NBRC 12614 / NCIMB 9131 / NCTC 9757 / MK).